The primary structure comprises 150 residues: Heavy metal-associated isoprenylated plant protein 24 (150 aa).

Residues 26-89 (QTVALRVARI…AAKSTKKKVE (64 aa)) form the HMA domain. Residues Cys-37 and Cys-40 each coordinate a metal cation. A Cysteine methyl ester modification is found at Cys-147. A lipid anchor (S-farnesyl cysteine) is attached at Cys-147. Residues 148–150 (AIM) constitute a propeptide, removed in mature form.

Belongs to the HIPP family. In terms of assembly, interacts with ZHD11/HB29.

Functionally, heavy-metal-binding protein. The chain is Heavy metal-associated isoprenylated plant protein 24 from Arabidopsis thaliana (Mouse-ear cress).